The following is a 470-amino-acid chain: Sperm-associated antigen 8 (470 aa).

Positions 1–21 (METTESTEGSLSRSCDVQPSS) are enriched in polar residues. Disordered regions lie at residues 1 to 70 (METT…PPAH), 117 to 178 (SGTC…GQGP), and 302 to 321 (LTTQPQSPMSSSTTQRDSYQ). Residues 27–48 (PSEPVPSSSSSPRSTAPAEAPA) are compositionally biased toward low complexity. Residues 51–60 (SVLTEPSSDS) show a composition bias toward polar residues. 2 stretches are compositionally biased toward low complexity: residues 122–175 (LGQS…ADPG) and 303–316 (TTQPQSPMSSSTTQ). 2 mn regions span residues 312 to 325 (SSTTQRDSYQLPRH) and 364 to 378 (ESVTHHDYRVELVRA).

The protein belongs to the SPAG8 family. Microtubule inner protein component of sperm flagellar doublet microtubules. Interacts with FHL5 (via second LIM domain). Interacts with RANBP9. In terms of tissue distribution, expressed in testis (at protein level). Not detected in brain, heart, kidney, spleen, liver, lung, thymus and colon (at protein level).

The protein localises to the cytoplasm. The protein resides in the nucleus. Its subcellular location is the cytoplasmic vesicle. It localises to the secretory vesicle. It is found in the acrosome. The protein localises to the cytoskeleton. The protein resides in the microtubule organizing center. Its subcellular location is the spindle. It localises to the cilium axoneme. It is found in the flagellum axoneme. Functionally, microtubule inner protein (MIP) part of the dynein-decorated doublet microtubules (DMTs) in cilia axoneme, which is required for motile cilia beating. Plays a role in spermatogenesis by enhancing the binding of CREM isoform tau to its coactivator FHL5 and increasing the FHL5-regulated transcriptional activation of CREM isoform tau. Involved in the acrosome reaction and in binding of sperm to the zona pellucida. Plays a role in regulation of the cell cycle by controlling progression through the G2/M phase, possibly by delaying the activation of CDK1 which is required for entry into mitosis. May play a role in fertility and microtubule formation through interaction with RANBP9. This is Sperm-associated antigen 8 from Mus musculus (Mouse).